A 129-amino-acid polypeptide reads, in one-letter code: Small ribosomal subunit protein uS12 (129 aa).

This sequence belongs to the universal ribosomal protein uS12 family. In terms of assembly, part of the 30S ribosomal subunit. Contacts proteins S8 and S17. May interact with IF1 in the 30S initiation complex.

Functionally, with S4 and S5 plays an important role in translational accuracy. Interacts with and stabilizes bases of the 16S rRNA that are involved in tRNA selection in the A site and with the mRNA backbone. Located at the interface of the 30S and 50S subunits, it traverses the body of the 30S subunit contacting proteins on the other side and probably holding the rRNA structure together. The combined cluster of proteins S8, S12 and S17 appears to hold together the shoulder and platform of the 30S subunit. The polypeptide is Small ribosomal subunit protein uS12 (Rickettsia typhi (strain ATCC VR-144 / Wilmington)).